The chain runs to 574 residues: Probable inactive serine/threonine-protein kinase slob2 (574 aa).

Residues 6 to 26 form a helical membrane-spanning segment; sequence YIIIAAVGGFAILTFIIIVVL. The region spanning 166–346 is the Protein kinase domain; sequence YADRGSLRDF…PLHRLTYTSR (181 aa). Residue Asn358 is glycosylated (N-linked (GlcNAc...) asparagine). Residues 366–386 form a disordered region; sequence SKPNSKDLSQPKLKDLKKQKK. 8 N-linked (GlcNAc...) asparagine glycosylation sites follow: Asn440, Asn449, Asn453, Asn456, Asn464, Asn470, Asn477, and Asn483. The segment covering 450–493 has biased composition (low complexity); sequence TTTNTTNTSTSSSLNSSFNSNVSTSYSNATTTTNTTSASSVSPP. The interval 450–574 is disordered; it reads TTTNTTNTST…DKSGPLLKKS (125 aa). Over residues 494–539 the composition is skewed to pro residues; sequence ISSPPPPPPPPPPSKSSGPPPPPPPPPKSSGPPPPPPPKSSPPPPA. Residues 546–556 are compositionally biased toward low complexity; it reads LLSSIESFSSS.

It belongs to the protein kinase superfamily. Ser/Thr protein kinase family.

It localises to the membrane. This is Probable inactive serine/threonine-protein kinase slob2 (slob2) from Dictyostelium discoideum (Social amoeba).